The sequence spans 189 residues: MYLVVGLGNIGKEYKKTRHNIGFDVVDIIAEKYNIEINRQKFKGSYGEGRIGNEKIILLKPSTYMNLSGESVIEAANFYKIDKENIIVIYDDMSIDIGKLRVRGKGSAGGHNGIKNIIQHLNSDIFPRVRVGIGQPDENVVNYVLGKFSKDQREIIDKVLAMSAKACISIVEDGVTEAMNKYNGVKIEV.

TRNA is bound at residue Y14. Catalysis depends on H19, which acts as the Proton acceptor. TRNA is bound by residues Y64, N66, and N112.

Belongs to the PTH family. Monomer.

Its subcellular location is the cytoplasm. The enzyme catalyses an N-acyl-L-alpha-aminoacyl-tRNA + H2O = an N-acyl-L-amino acid + a tRNA + H(+). In terms of biological role, hydrolyzes ribosome-free peptidyl-tRNAs (with 1 or more amino acids incorporated), which drop off the ribosome during protein synthesis, or as a result of ribosome stalling. Functionally, catalyzes the release of premature peptidyl moieties from peptidyl-tRNA molecules trapped in stalled 50S ribosomal subunits, and thus maintains levels of free tRNAs and 50S ribosomes. In Clostridium botulinum (strain Okra / Type B1), this protein is Peptidyl-tRNA hydrolase.